Reading from the N-terminus, the 164-residue chain is Bacterial microcompartment shell protein EutK (164 aa).

The BMC domain maps to 4 to 88; the sequence is ALGLLEVDGM…PEEDTQWLIG (85 aa). A EutK-Ctail domain is found at 108–164; that stretch reads EFAEALLALLASVRQGMTAGEVAAHFGWPLEQARNVLEQLFSDGALRKRSSRYRIKN.

It belongs to the bacterial microcompartments protein family. In terms of assembly, monomeric in solution.

The protein localises to the bacterial microcompartment. It functions in the pathway amine and polyamine degradation; ethanolamine degradation. Functionally, a component of the bacterial microcompartment (BMC) shell dedicated to ethanolamine degradation. Expression of eutK, eutL, eutM, eutN, eutS (eutSMNLK) in E.coli leads to formation of a single BMC. Coexpression of eutQ with eutSMNLK permits E.coli to make cells with more than one mobile BMC, as is usual in vivo. In terms of biological role, the ethanolamine (EA) catabolic bacterial microcompartment (BMC) probably concentrates low levels of ethanolamine catabolic enzymes, concentrates volatile reaction intermediates, keeps the level of toxic acetaldehyde low, generates enough acetyl-CoA to support cell growth, and maintains a pool of free coenzyme A (CoA) and NAD. Deletion of BMC genes (eutK, eutL, eutM) restores growth of eutD deletions, suggesting there are dedicated pools of coenzyme A (CoA) and NAD in the BMC. Its function is as follows. Expression of the eut operon allows this bacteria to use ethanolamine as a carbon, nitrogen and energy source. It relies on cobalamin (vitamin B12) both as a cofactor for the ethanolamine ammonia-lyase (EAL) activity and to induce the operon. EA enhances bacterial survival in macrophages in a concentration-dependent manner, suggesting it is an important nutrient during infection. This is Bacterial microcompartment shell protein EutK (eutK) from Salmonella typhimurium (strain LT2 / SGSC1412 / ATCC 700720).